Reading from the N-terminus, the 518-residue chain is D-aminopeptidase (518 aa).

Residue Ser-62 is the Nucleophile of the active site. The Proton donor/acceptor role is filled by Lys-65. Residues 373–392 form a disordered region; sequence FGTGPEKMDISGENEAQSSM. Positions 477 to 487 are important for specificity; it reads QRSMDAPSPGE. Substrate is bound at residue Asp-481.

The protein belongs to the peptidase S12 family. In terms of assembly, homodimer.

It catalyses the reaction Release of an N-terminal D-amino acid from a peptide, Xaa-|-Yaa-, in which Xaa is preferably D-Ala, D-Ser or D-Thr. D-amino acid amides and methyl esters also are hydrolyzed, as is glycine amide.. Inhibited by beta-lactam compounds such as 6-aminopenicillic acid, 7-aminocephalosporanic acid, benzylpenicillin and ampicillin. Inhibited by p-chloromercuribenzoate. Its function is as follows. Hydrolyzes N-terminal residues in D-amino acid-containing peptides. This chain is D-aminopeptidase, found in Brucella melitensis biotype 1 (strain ATCC 23456 / CCUG 17765 / NCTC 10094 / 16M).